The following is a 451-amino-acid chain: UDP-N-acetylmuramoylalanine--D-glutamate ligase (451 aa).

Gly120 to Thr126 lines the ATP pocket.

Belongs to the MurCDEF family.

Its subcellular location is the cytoplasm. It carries out the reaction UDP-N-acetyl-alpha-D-muramoyl-L-alanine + D-glutamate + ATP = UDP-N-acetyl-alpha-D-muramoyl-L-alanyl-D-glutamate + ADP + phosphate + H(+). It functions in the pathway cell wall biogenesis; peptidoglycan biosynthesis. Functionally, cell wall formation. Catalyzes the addition of glutamate to the nucleotide precursor UDP-N-acetylmuramoyl-L-alanine (UMA). This chain is UDP-N-acetylmuramoylalanine--D-glutamate ligase (murD), found in Bacillus subtilis (strain 168).